The following is a 534-amino-acid chain: Cytochrome P450 monooxygenase btcB (534 aa).

The N-linked (GlcNAc...) asparagine glycan is linked to asparagine 20. The chain crosses the membrane as a helical span at residues 41–61 (ALAFLCGALLFGFVYSVFYNL). 3 N-linked (GlcNAc...) asparagine glycosylation sites follow: asparagine 335, asparagine 413, and asparagine 431. Cysteine 484 provides a ligand contact to heme.

Belongs to the cytochrome P450 family. The cofactor is heme.

The protein resides in the membrane. The protein operates within secondary metabolite biosynthesis; terpenoid biosynthesis. In terms of biological role, cytochrome P4590 monooxygenase part of the gene cluster that mediates the biosynthesis of betaestacins. The bifunctional terpene synthase btcA converts isopentenyl diphosphate (IPP) and dimethylallyl diphosphate (DMAPP) into the sesterterpene betaestacin I. The C-terminal prenyltransferase (PT) domain of btcA catalyzes formation of GFPP, whereas the N-terminal terpene cyclase (TC) domain catalyzes the cyclization of GFPP into betaestacin I. The cytochrome P450 monooxygenase btcB oxidizes the C25 methyl group of betaestacin I to yield the carboxylic acid betaestacin IV via the alcohol betaestacin III. The cytochrome P450 monooxygenase btcC further catalyzes the multistep oxidation of betaestacin IV to produce several compounds, including betaestacins Va, Vb, Vc and VI. This Colletotrichum orbiculare (strain 104-T / ATCC 96160 / CBS 514.97 / LARS 414 / MAFF 240422) (Cucumber anthracnose fungus) protein is Cytochrome P450 monooxygenase btcB.